A 20-amino-acid polypeptide reads, in one-letter code: Large ribosomal subunit protein uL5 (20 aa).

Belongs to the universal ribosomal protein uL5 family. Part of the 50S ribosomal subunit; part of the 5S rRNA/L5/L18/L25 subcomplex. Contacts the 5S rRNA and the P site tRNA. Forms a bridge to the 30S subunit in the 70S ribosome.

Its function is as follows. This is one of the proteins that bind and probably mediate the attachment of the 5S RNA into the large ribosomal subunit, where it forms part of the central protuberance. In the 70S ribosome it contacts protein S13 of the 30S subunit (bridge B1b), connecting the two subunits; this bridge is implicated in subunit movement. Contacts the P site tRNA; the 5S rRNA and some of its associated proteins might help stabilize positioning of ribosome-bound tRNAs. This is Large ribosomal subunit protein uL5 (rplE) from Bacillus cereus.